Consider the following 390-residue polypeptide: Ketoisovalerate reductase BEA2 (390 aa).

NADP(+) is bound at residue 70-75; it reads GPGNIG. K285 (proton donor) is an active-site residue. Substrate is bound by residues N289 and N293.

This sequence belongs to the ketopantoate reductase family.

The catalysed reaction is (R)-2-hydroxy-3-methylbutanoate + NADP(+) = 3-methyl-2-oxobutanoate + NADPH + H(+). The reductase activity is increased by Mg(2+) (195%), Ca(2+) (169%) and slightly increased by K(+) (123%). The reduction activity is inhibited by Fe(2+) and Co(2+), and almost totally inhibited by Cu(2+), Mn(2+), Zn(2+) and Fe(3+) (from 3% to 9% residual activity respectively). The chelating agent EDTA had little effect, suggesting Mg(2+) and Ca(2+) are not determining factors, though they could promote the reductase enzyme activity. Ketoisovalerate reductase; part of the gene cluster that mediates the biosynthesis of beauvericin (BEA), a non-ribosomal cyclic hexadepsipeptide that shows antibiotic, antifungal, insecticidal, and cancer cell antiproliferative and antihaptotactic activity. Ketoisovalerate reductase BEA2 catalyzes the NADPH-specific reduction of ketoisovaleric acid to hydroxyisovalerate, a precursor for beauvericin biosynthesis. The nonribosomal cyclodepsipeptide synthetase BEA1 then catalyzes the formation of beauvericin via condensation and cyclization of 3 dipeptidol monomers, each composed of one unit of hydroxyisovalerate and one unit of N-methyl-phenylalanine. The chain is Ketoisovalerate reductase BEA2 from Gibberella intermedia (Bulb rot disease fungus).